Consider the following 248-residue polypeptide: Myelin protein P0 (248 aa).

The first 29 residues, 1–29 (MAPGAPSSSPSPILAALLFSSLVLSPAQA), serve as a signal peptide directing secretion. An Ig-like V-type domain is found at 30–143 (IVVYTDKEVY…DIVGKTSQVT (114 aa)). Residues 30 to 153 (IVVYTDKEVY…LYVFEKVPTR (124 aa)) lie on the Extracellular side of the membrane. Cysteine 50 and cysteine 127 are joined by a disulfide. Residue asparagine 122 is glycosylated (N-linked (GlcNAc...) (complex) asparagine). The helical transmembrane segment at 154–179 (YGVVLGAVIGGVLGVVLLVLLLFYVV) threads the bilayer. The Cytoplasmic segment spans residues 180 to 248 (RYCWLRRQAA…GLGESRKDKK (69 aa)). Position 210 is a phosphoserine; by PKC (serine 210). A disordered region spans residues 222 to 248 (MLDHSRSTKAASEKKAKGLGESRKDKK). Basic and acidic residues predominate over residues 224 to 248 (DHSRSTKAASEKKAKGLGESRKDKK). A phosphoserine mark is found at serine 226 and serine 228. 2 positions are modified to phosphoserine; by PKC: serine 233 and serine 243.

This sequence belongs to the myelin P0 protein family. As to quaternary structure, homodimer and homotetramer. Post-translationally, N-glycosylated; contains sulfate-substituted glycan.

The protein localises to the cell membrane. Its function is as follows. Is an adhesion molecule necessary for normal myelination in the peripheral nervous system. It mediates adhesion between adjacent myelin wraps and ultimately drives myelin compaction. This Equus caballus (Horse) protein is Myelin protein P0 (MPZ).